We begin with the raw amino-acid sequence, 345 residues long: 4-hydroxyproline 2-epimerase (345 aa).

Gln-85 is a substrate binding site. Catalysis depends on Ser-93, which acts as the Proton acceptor. Substrate is bound by residues 94-95 (GS) and Asp-251. Cys-255 acts as the Proton donor in catalysis. 256-257 (GT) lines the substrate pocket.

The protein belongs to the proline racemase family.

The enzyme catalyses trans-4-hydroxy-L-proline = cis-4-hydroxy-D-proline. In terms of biological role, catalyzes the epimerization of trans-4-hydroxy-L-proline (t4LHyp) to cis-4-hydroxy-D-proline (c4DHyp). May be involved in a degradation pathway of t4LHyp, which would allow A.tumefaciens to grow on t4LHyp as a sole carbon source. Can also catalyze the epimerization of trans-3-hydroxy-L-proline (t3LHyp) to cis-3-hydroxy-D-proline (c3DHyp) in vitro. Displays no proline racemase activity. This chain is 4-hydroxyproline 2-epimerase, found in Agrobacterium fabrum (strain C58 / ATCC 33970) (Agrobacterium tumefaciens (strain C58)).